The chain runs to 558 residues: NAD(P)H-quinone oxidoreductase chain 4 (558 aa).

Transmembrane regions (helical) follow at residues 25-45 (FPWL…VPFI), 56-76 (WYAL…YLKG), 111-131 (LILL…PVSF), 133-153 (PKLF…VFAV), 157-177 (LLFF…LAIW), 189-209 (FIIY…AMGF), 230-250 (GFQL…LPVV), 264-284 (TAPV…YALL), 298-318 (FAPL…LTSF), 327-347 (IAYS…SFSS), 353-373 (AMLQ…LVGA), 395-417 (IMFA…SGFV), 438-458 (IVIA…LLSM), and 485-505 (IYVI…PRIM).

This sequence belongs to the complex I subunit 4 family.

The protein localises to the cellular thylakoid membrane. The catalysed reaction is a plastoquinone + NADH + (n+1) H(+)(in) = a plastoquinol + NAD(+) + n H(+)(out). It catalyses the reaction a plastoquinone + NADPH + (n+1) H(+)(in) = a plastoquinol + NADP(+) + n H(+)(out). Its function is as follows. NDH-1 shuttles electrons from NAD(P)H, via FMN and iron-sulfur (Fe-S) centers, to quinones in the respiratory chain. The immediate electron acceptor for the enzyme in this species is believed to be plastoquinone. Couples the redox reaction to proton translocation (for every two electrons transferred, four hydrogen ions are translocated across the cytoplasmic membrane), and thus conserves the redox energy in a proton gradient. This Prochlorococcus marinus (strain MIT 9211) protein is NAD(P)H-quinone oxidoreductase chain 4.